The sequence spans 336 residues: Mitochondrial fission regulator 2 (336 aa).

The stretch at 139–166 forms a coiled coil; it reads QPDALLKISALEEELQRLRAQIATIITA. Residues 296–336 are disordered; sequence HRQRDDSFGKENHSAEPSPFSSPDTPRIFQHTRRSQGRIHL. Over residues 297-309 the composition is skewed to basic and acidic residues; sequence RQRDDSFGKENHS. The span at 325 to 336 shows a compositional bias: basic residues; the sequence is QHTRRSQGRIHL.

It belongs to the MTFR1 family.

The protein localises to the mitochondrion. Its function is as follows. May play a role in mitochondrial aerobic respiration. Can also promote mitochondrial fission. The protein is Mitochondrial fission regulator 2 (mtfr2) of Danio rerio (Zebrafish).